We begin with the raw amino-acid sequence, 136 residues long: C-type natriuretic peptide prohormone (136 aa).

The signal sequence occupies residues 1-21 (MSGQTSFYCGLLLVLLIQAQA). A disulfide bond links cysteine 120 and cysteine 136.

The protein belongs to the natriuretic peptide family. CNP-115 is differentially processed to produce CNP-38 and CNP-39 in the heart and CNP-22 in the brain.

The protein localises to the secreted. Its function is as follows. Hormone which may be vasoactive and natriuretic. Has a cGMP-stimulating activity. This is C-type natriuretic peptide prohormone from Triakis scyllium (Banded houndshark).